A 231-amino-acid polypeptide reads, in one-letter code: GFP-like fluorescent chromoprotein FP506 (231 aa).

The segment at residues 66–68 (NYG) is a cross-link (5-imidazolinone (Asn-Gly)). Tyr67 is modified (2,3-didehydrotyrosine).

It belongs to the GFP family. Contains a chromophore consisting of modified amino acid residues. The chromophore is formed by autocatalytic backbone condensation between Xaa-N and Gly-(N+2), and oxidation of Tyr-(N+1) to didehydrotyrosine. Maturation of the chromophore requires nothing other than molecular oxygen. The precise stereochemistry of the tyrosine has not been determined. Tentacle and oral disk.

Pigment protein that is yellow-green in color. This is GFP-like fluorescent chromoprotein FP506 from Zoanthus sp. (Green polyp).